The primary structure comprises 575 residues: Chaperonin CPN60-1, mitochondrial (575 aa).

A mitochondrion-targeting transit peptide spans Met-1–Tyr-32.

The protein belongs to the chaperonin (HSP60) family.

The protein resides in the mitochondrion. In terms of biological role, implicated in mitochondrial protein import and macromolecular assembly. May facilitate the correct folding of imported proteins. May also prevent misfolding and promote the refolding and proper assembly of unfolded polypeptides generated under stress conditions in the mitochondrial matrix. The polypeptide is Chaperonin CPN60-1, mitochondrial (CPN60-1) (Cucurbita maxima (Pumpkin)).